The sequence spans 1221 residues: DNA-directed RNA polymerase subunit beta (1221 aa).

The tract at residues Glu-1176–Lys-1221 is disordered. Over residues Glu-1183–Asp-1215 the composition is skewed to acidic residues.

It belongs to the RNA polymerase beta chain family. In terms of assembly, the RNAP catalytic core consists of 2 alpha, 1 beta, 1 beta' and 1 omega subunit. When a sigma factor is associated with the core the holoenzyme is formed, which can initiate transcription.

The enzyme catalyses RNA(n) + a ribonucleoside 5'-triphosphate = RNA(n+1) + diphosphate. In terms of biological role, DNA-dependent RNA polymerase catalyzes the transcription of DNA into RNA using the four ribonucleoside triphosphates as substrates. The protein is DNA-directed RNA polymerase subunit beta of Lactobacillus delbrueckii subsp. bulgaricus (strain ATCC 11842 / DSM 20081 / BCRC 10696 / JCM 1002 / NBRC 13953 / NCIMB 11778 / NCTC 12712 / WDCM 00102 / Lb 14).